A 5571-amino-acid polypeptide reads, in one-letter code: Polyketide synthase GfsB (5571 aa).

The interval 1 to 27 (MSVPPPGATPSRTSRTKGLKDRPRMEN) is disordered. Positions 18–27 (GLKDRPRMEN) are enriched in basic and acidic residues. The region spanning 57-483 (QEPVAIIGMS…GTNAHVIIEQ (427 aa)) is the Ketosynthase family 3 (KS3) 1 domain. Module regions lie at residues 57–2148 (QEPV…RDTL), 2167–3728 (DEPL…GSQV), and 3746–5485 (DEPV…HTHL). Catalysis depends on for beta-ketoacyl synthase 1 activity residues Cys230, His365, and His405. A disordered region spans residues 485–518 (PAIEGTGLGDDAPPTAEHPEERTPADGGPAPQPV). The region spanning 611–926 (FVFPGQGSQW…LRSLAEAYAH (316 aa)) is the Malonyl-CoA:ACP transacylase (MAT) 1 domain. An N-terminal hotdog fold 1 region spans residues 976 to 1109 (HPLLAAATSL…GYLAVGAHEP (134 aa)). The PKS/mFAS DH 1 domain occupies 976-1264 (HPLLAAATSL…LRPLATNQAP (289 aa)). His1008 (proton acceptor; for dehydratase activity 1) is an active-site residue. The segment at 1122-1264 (ATPLDVTDLY…LRPLATNQAP (143 aa)) is C-terminal hotdog fold 1. Residue Asp1183 is the Proton donor; for dehydratase activity 1 of the active site. In terms of domain architecture, Enoyl reductase (ER) spans 1478–1777 (GTLDHLTLIP…QARHIGKIVL (300 aa)). Residues 1787-1966 (GTVLVTGATG…TSLAWGLWEE (180 aa)) form the Ketoreductase (KR) 1 domain. Residues 2073–2148 (RIVNDLVRDH…ELAAHLRDTL (76 aa)) form the Carrier 1 domain. Ser2108 is modified (O-(pantetheine 4'-phosphoryl)serine). Positions 2167–2593 (DEPLAVVAMS…GTNAHVILEQ (427 aa)) constitute a Ketosynthase family 3 (KS3) 2 domain. Residues Cys2340, His2475, and His2515 each act as for beta-ketoacyl synthase 2 activity in the active site. The region spanning 2710–3016 (VFSGQGSQRP…AAVALQRGNR (307 aa)) is the Malonyl-CoA:ACP transacylase (MAT) 2 domain. One can recognise a Ketoreductase (KR) 2 domain in the interval 3373–3551 (GTVLVTGGTG…VSVAWGPWAE (179 aa)). The region spanning 3653–3728 (TALLDLVRGQ…ALAEYVGSQV (76 aa)) is the Carrier 2 domain. An O-(pantetheine 4'-phosphoryl)serine modification is found at Ser3688. Positions 3746-4172 (DEPVAIIGMS…GTNAHVILEQ (427 aa)) constitute a Ketosynthase family 3 (KS3) 3 domain. Active-site for beta-ketoacyl synthase 3 activity residues include Cys3919, His4054, and His4094. The Malonyl-CoA:ACP transacylase (MAT) 3 domain maps to 4279–4601 (FLFSGQGSQR…ATAHVNGVQP (323 aa)). Positions 4649-4774 (HPLLAGVVDL…GALTVAEAVD (126 aa)) are N-terminal hotdog fold 2. The PKS/mFAS DH 2 domain maps to 4649-4931 (HPLLAGVVDL…TRPIAAGQLA (283 aa)). His4681 acts as the Proton acceptor; for dehydratase activity 2 in catalysis. Residues 4787-4931 (AIEVELDDPY…TRPIAAGQLA (145 aa)) are C-terminal hotdog fold 2. The Proton donor; for dehydratase activity 2 role is filled by Asp4848. The Ketoreductase (KR) 3 domain occupies 5134 to 5306 (LLVTGASGVL…TSLSWGLWAE (173 aa)). The region spanning 5410-5485 (RMVLDLVRDR…ALARYLHTHL (76 aa)) is the Carrier 3 domain. An O-(pantetheine 4'-phosphoryl)serine modification is found at Ser5445.

Requires pantetheine 4'-phosphate as cofactor.

It functions in the pathway antibiotic biosynthesis. In terms of biological role, second protein in the synthesis of the 16-membered macrolide antibiotics FD-891 and FD-892. Composed of 3 modules. Modifies the product of GfsA by multiple rounds of addition of malonyl-CoA or methylmalonyl-CoA and other modifications to help generate the final products. The chain is Polyketide synthase GfsB from Streptomyces halstedii.